We begin with the raw amino-acid sequence, 441 residues long: MRVSSALLQKAAKTVDKYSLYVPKSGVFPKGFKVASLASGVKKNGNRDLGIILNTNKSRPSNAAAVFTTNRFKAAPVLVSKQVLDGSSGEGVNAIVANSGCANAVTGELGMQDAQKVAGQVNAHIGKENSTLVMSTGVIGQRLQMDKISKGINTLFDQKQFGSDFNSWLNLAKSICTTDTFPKLISSKFQLSDGTEYTLTGISKGAGMICPNMATLLGFIVTDLPIKASTLQAMLTAAVNRSFNCISVDGDMSTNDTICMLANGAVDTFVIDEASPDFEQVKSQVTEFAKQLAQLVVRDGEGATKFVTVNVKNSANFKDARIIAETISNSMLVKSALYGQDANWGRILCAIGYSKLENLASLDESKINVSFIATDNSSPRELKLIANGVPQFDIDENRASEILALPDLEILVDMGTGSEECQFWTCDLSHEYVTINGDYRS.

6 residues coordinate substrate: Thr177, Lys204, Thr215, Glu301, Asn436, and Ser441. Thr215 functions as the Nucleophile in the catalytic mechanism.

This sequence belongs to the ArgJ family. Heterodimer of an alpha and a beta chain. Post-translationally, the alpha and beta chains are autoproteolytically processed from a single precursor protein within the mitochondrion.

Its subcellular location is the mitochondrion matrix. It carries out the reaction N(2)-acetyl-L-ornithine + L-glutamate = N-acetyl-L-glutamate + L-ornithine. It catalyses the reaction L-glutamate + acetyl-CoA = N-acetyl-L-glutamate + CoA + H(+). Its pathway is amino-acid biosynthesis; L-arginine biosynthesis; L-ornithine and N-acetyl-L-glutamate from L-glutamate and N(2)-acetyl-L-ornithine (cyclic): step 1/1. It functions in the pathway amino-acid biosynthesis; L-arginine biosynthesis; N(2)-acetyl-L-ornithine from L-glutamate: step 1/4. Functionally, catalyzes two activities which are involved in the cyclic version of arginine biosynthesis: the synthesis of acetylglutamate from glutamate and acetyl-CoA, and of ornithine by transacetylation between acetylornithine and glutamate. In Lachancea thermotolerans (strain ATCC 56472 / CBS 6340 / NRRL Y-8284) (Yeast), this protein is Arginine biosynthesis bifunctional protein ArgJ, mitochondrial.